Reading from the N-terminus, the 321-residue chain is Peroxidase 42 (321 aa).

A signal peptide spans 1-29 (MATSSGSCLIISLLVVVVAAALSASTASA). Gln30 bears the Pyrrolidone carboxylic acid mark. Intrachain disulfides connect Cys40–Cys118, Cys73–Cys78, Cys124–Cys315, and Cys202–Cys227. The active-site Proton acceptor is His71. Ca(2+) is bound by residues Asp72, Ile75, Gly77, Asp79, and Ser81. N-linked (GlcNAc...) asparagine glycans are attached at residues Asn85 and Asn96. Pro165 is a substrate binding site. His195 contacts heme b. Thr196 is a binding site for Ca(2+). Asn211 is a glycosylation site (N-linked (GlcNAc...) asparagine). Residues Asp239, Thr242, and Gly247 each contribute to the Ca(2+) site. Asn270 carries an N-linked (GlcNAc...) asparagine glycan.

It belongs to the peroxidase family. Classical plant (class III) peroxidase subfamily. It depends on heme b as a cofactor. The cofactor is Ca(2+).

It localises to the secreted. It carries out the reaction 2 a phenolic donor + H2O2 = 2 a phenolic radical donor + 2 H2O. Removal of H(2)O(2), oxidation of toxic reductants, biosynthesis and degradation of lignin, suberization, auxin catabolism, response to environmental stresses such as wounding, pathogen attack and oxidative stress. These functions might be dependent on each isozyme/isoform in each plant tissue. This Zea mays (Maize) protein is Peroxidase 42 (PER42).